The sequence spans 601 residues: AT-rich interactive domain-containing protein 3A (601 aa).

Residues 1 to 224 are disordered; that stretch reads MKLQAVMETL…HMASQMPPPD (224 aa). Over residues 60–89 the composition is skewed to low complexity; that stretch reads MAALAAMRAAAAGLGHPSSPGGSEDGPPIS. S78, S82, and S89 each carry phosphoserine. T99 carries the phosphothreonine modification. S102 carries the post-translational modification Phosphoserine. Over residues 114–123 the composition is skewed to basic and acidic residues; it reads GHAEGDRHLM. S127 bears the Phosphoserine mark. The acidic stretch occupies residues 128-165; that stretch reads DDDDTKSKWEEQELEELGEEEEEEEEEDDFEEEEEEEE. The span at 139-166 shows a compositional bias: acidic residues; the sequence is QELEELGEEEEEEEEEDDFEEEEEEEEG. The region spanning 243 to 335 is the ARID domain; that stretch reads DPKRKEFLDD…YLYPYECERR (93 aa). A phosphoserine mark is found at S358 and S367. Residues K403, K404, K457, and K467 each participate in a glycyl lysine isopeptide (Lys-Gly) (interchain with G-Cter in SUMO2) cross-link. In terms of domain architecture, REKLES spans 449–546; sequence AALEQLREKL…GVLFAQPPPP (98 aa). The important for nuclear localization stretch occupies residues 450 to 493; it reads ALEQLREKLESTEPPEKKMALVADEQQRLMQRAVQQSFLAMTAQ. The tract at residues 495–518 is homodimerization; that stretch reads PMNIRINSQASESRQDSAVSLTSA. Positions 542–562 are important for cytoplasmic localization; sequence QPPPPTAPSAPGKGGVSSIGT. A disordered region spans residues 545–601; it reads PPTAPSAPGKGGVSSIGTNTTTGSRTGASGSTVSGGQVGLPGVSTPTMSSTSNNSLP. Low complexity-rich tracts occupy residues 559–579 and 588–601; these read SIGT…TVSG and STPT…NSLP.

Homodimer. Heterodimer with ARID3B. Interacts with E2F1. Interacts with GTF2I and BTK. In terms of tissue distribution, B-cell specific in the adult. Expressed in B-cell progenitors, down-regulated in the immature B-cell stage, and is up-regulated again at later stages of B-lymphocyte differentiation.

It is found in the nucleus. The protein localises to the cytoplasm. Transcription factor involved in B-cell differentiation. Binds a VH promoter proximal site necessary for induced mu-heavy-chain transcription. Binds the minor groove of a restricted ATC sequence that is sufficient for nuclear matrix association. This sequence motif is present in matrix-associating regions (MARS) proximal to the promoter and flanking E mu. Activates E mu-driven transcription by binding these sites. May be involved in the control of cell cycle progression by the RB1/E2F1 pathway. The sequence is that of AT-rich interactive domain-containing protein 3A (Arid3a) from Mus musculus (Mouse).